The following is an 872-amino-acid chain: Alanine--tRNA ligase (872 aa).

His567, His571, Cys669, and His673 together coordinate Zn(2+).

The protein belongs to the class-II aminoacyl-tRNA synthetase family. Zn(2+) is required as a cofactor.

The protein resides in the cytoplasm. It catalyses the reaction tRNA(Ala) + L-alanine + ATP = L-alanyl-tRNA(Ala) + AMP + diphosphate. Its function is as follows. Catalyzes the attachment of alanine to tRNA(Ala) in a two-step reaction: alanine is first activated by ATP to form Ala-AMP and then transferred to the acceptor end of tRNA(Ala). Also edits incorrectly charged Ser-tRNA(Ala) and Gly-tRNA(Ala) via its editing domain. This is Alanine--tRNA ligase from Streptococcus agalactiae serotype Ia (strain ATCC 27591 / A909 / CDC SS700).